Consider the following 1266-residue polypeptide: Formin-like protein 13 (1266 aa).

The 185-residue stretch at 9 to 193 folds into the Phosphatase tensin-type domain; it reads YRKPPDGLLE…QYVSRRNLVS (185 aa). Cys126 acts as the Phosphocysteine intermediate in catalysis. One can recognise a C2 tensin-type domain in the interval 199 to 337; it reads DRALTMDCVI…FRVELLFSDM (139 aa). Disordered regions lie at residues 497–568, 597–825, 881–902, and 1210–1266; these read KPLV…LQHS, KNLI…GKGR, SASA…PKPE, and QLEA…RTAP. Pro residues predominate over residues 529-538; the sequence is PPTPSPPHPV. A compositionally biased stretch (polar residues) spans 617-644; the sequence is EPSSKTTNSLLLSPQASPATPTNPSKTV. Pro residues-rich tracts occupy residues 686 to 698, 706 to 742, 754 to 781, and 806 to 815; these read LPRP…PPPM, VPPP…PPTP, PPAP…PPPL, and PNVPPTPALP. An FH2 domain is found at 829 to 1226; the sequence is VNLKNSPAKK…KNAAEKEKPK (398 aa). Composition is skewed to basic and acidic residues over residues 889-902, 1210-1248, and 1255-1266; these read GKSR…PKPE, QLEA…EKTK, and EMSDRLKERTAP.

This sequence belongs to the formin-like family. Class-II subfamily.

The chain is Formin-like protein 13 (FH13) from Arabidopsis thaliana (Mouse-ear cress).